Here is a 74-residue protein sequence, read N- to C-terminus: Peptide Im-4 (74 aa).

An N-terminal signal peptide occupies residues 1-22 (MKFQYLLAIFMIVLVVTDHCQA). Lysine 39 is modified (lysine amide; partial). Residues 40–74 (GRRRRQLEARYEPQQRNFRKREIDFEKLFANMPDY) constitute a propeptide that is removed on maturation.

Belongs to the non-disulfide-bridged peptide (NDBP) superfamily. Short antimicrobial peptide (group 4) family. In terms of tissue distribution, expressed by the venom gland.

It is found in the secreted. It localises to the target cell membrane. Antimicrobial peptide that probably forms pores in target membranes. Has antibacterial activity against Gram-positive bacteria S.aureus NBRC 13276 (MIC=5-10 uM) and B.subtilis NBRC 3009 (MIC=2.5-5 uM) but not against Gram-negative bacterium E.coli NBRC 3972. This Isometrus maculatus (Lesser brown scorpion) protein is Peptide Im-4.